The following is a 229-amino-acid chain: Large ribosomal subunit protein uL1 (229 aa).

Belongs to the universal ribosomal protein uL1 family. Part of the 50S ribosomal subunit.

Functionally, binds directly to 23S rRNA. The L1 stalk is quite mobile in the ribosome, and is involved in E site tRNA release. Protein L1 is also a translational repressor protein, it controls the translation of the L11 operon by binding to its mRNA. The chain is Large ribosomal subunit protein uL1 from Thermus thermophilus (strain ATCC BAA-163 / DSM 7039 / HB27).